Here is a 298-residue protein sequence, read N- to C-terminus: 4-hydroxy-tetrahydrodipicolinate synthase (298 aa).

T48 provides a ligand contact to pyruvate. Y137 serves as the catalytic Proton donor/acceptor. K166 functions as the Schiff-base intermediate with substrate in the catalytic mechanism. Residue I207 coordinates pyruvate.

This sequence belongs to the DapA family. Homotetramer; dimer of dimers.

It localises to the cytoplasm. It carries out the reaction L-aspartate 4-semialdehyde + pyruvate = (2S,4S)-4-hydroxy-2,3,4,5-tetrahydrodipicolinate + H2O + H(+). It functions in the pathway amino-acid biosynthesis; L-lysine biosynthesis via DAP pathway; (S)-tetrahydrodipicolinate from L-aspartate: step 3/4. Catalyzes the condensation of (S)-aspartate-beta-semialdehyde [(S)-ASA] and pyruvate to 4-hydroxy-tetrahydrodipicolinate (HTPA). The protein is 4-hydroxy-tetrahydrodipicolinate synthase of Campylobacter jejuni subsp. jejuni serotype O:23/36 (strain 81-176).